The chain runs to 364 residues: Spermatogenesis-associated protein 22 (364 aa).

Polar residues-rich tracts occupy residues 1–13, 30–48, 73–108, 137–169, and 177–189; these read MKRN…TRST, QPLT…NASD, KTVN…SKSD, LMTN…LPNQ, and QTKS…STMR. Disordered stretches follow at residues 1–51 and 70–189; these read MKRN…DNYD and PLTK…STMR.

In terms of assembly, component of a multiprotein complex with MEIOB and RPA2. Interacts with MEIOB. Interacts with the complex BRME1:HSF2BP:BRCA2.

Its subcellular location is the chromosome. In terms of biological role, meiosis-specific protein required for homologous recombination in meiosis I. This chain is Spermatogenesis-associated protein 22 (SPATA22), found in Bos taurus (Bovine).